Here is an 82-residue protein sequence, read N- to C-terminus: Consomatin Mao1 (82 aa).

The N-terminal stretch at 1 to 22 (MQTASWVMVMMMVWITAPLSEG) is a signal peptide. A propeptide spanning residues 23 to 57 (GKLNDVIRGLVPDDVTPQLILRSLFFHRPSDSVVR) is cleaved from the precursor. Cys65 and Cys70 form a disulfide bridge. Residue Trp67 is modified to D-tryptophan. 4-hydroxyproline occurs at positions 71, 72, and 74. Positions 75–82 (WRRPNGKG) are excised as a propeptide.

This sequence belongs to the conotoxin C superfamily. Consomatin family. Expressed by the venom duct.

Its subcellular location is the secreted. Its function is as follows. Moderately activates human somatostatin receptors (SSTR) with a preferential activation of SSTR1 and SSTR4. In vivo, does not cause behavioral changes in mice within a few minutes of intracranial injection, but causes a progressive loss of movement thereafter. Four to five hours after injection, mice recover, even with the highest dose tested. Shows antinociception and antihyperalgesia activities in two mouse models of acute pain, most probably by acting outside the central nervous system. This is Consomatin Mao1 from Conus maioensis (Sea snail).